Reading from the N-terminus, the 441-residue chain is Arginine biosynthesis bifunctional protein ArgJ, mitochondrial (441 aa).

Thr177, Lys204, Thr215, Glu301, Asn436, and Ser441 together coordinate substrate. Thr215 (nucleophile) is an active-site residue.

This sequence belongs to the ArgJ family. In terms of assembly, heterodimer of an alpha and a beta chain. In terms of processing, the alpha and beta chains are autoproteolytically processed from a single precursor protein within the mitochondrion.

Its subcellular location is the mitochondrion matrix. It catalyses the reaction N(2)-acetyl-L-ornithine + L-glutamate = N-acetyl-L-glutamate + L-ornithine. The catalysed reaction is L-glutamate + acetyl-CoA = N-acetyl-L-glutamate + CoA + H(+). Its pathway is amino-acid biosynthesis; L-arginine biosynthesis; L-ornithine and N-acetyl-L-glutamate from L-glutamate and N(2)-acetyl-L-ornithine (cyclic): step 1/1. It functions in the pathway amino-acid biosynthesis; L-arginine biosynthesis; N(2)-acetyl-L-ornithine from L-glutamate: step 1/4. Catalyzes two activities which are involved in the cyclic version of arginine biosynthesis: the synthesis of acetylglutamate from glutamate and acetyl-CoA, and of ornithine by transacetylation between acetylornithine and glutamate. The chain is Arginine biosynthesis bifunctional protein ArgJ, mitochondrial from Lachancea thermotolerans (strain ATCC 56472 / CBS 6340 / NRRL Y-8284) (Yeast).